The chain runs to 62 residues: uncharacterized protein (62 aa).

The span at 1-18 shows a compositional bias: polar residues; that stretch reads MTTNRVDPLEQTSPNTPT. The tract at residues 1–24 is disordered; the sequence is MTTNRVDPLEQTSPNTPTSKREKA.

This is an uncharacterized protein from Rickettsia conorii (strain ATCC VR-613 / Malish 7).